The following is a 329-amino-acid chain: Octaprenyl diphosphate synthase (329 aa).

Isopentenyl diphosphate-binding residues include Lys51, Arg54, and His83. Positions 90 and 94 each coordinate Mg(2+). Arg99 is a binding site for an all-trans-polyprenyl diphosphate. Position 100 (Arg100) interacts with isopentenyl diphosphate. 3 residues coordinate an all-trans-polyprenyl diphosphate: Lys176, Thr177, and Gln214.

The protein belongs to the FPP/GGPP synthase family. The cofactor is Mg(2+).

The catalysed reaction is 5 isopentenyl diphosphate + (2E,6E)-farnesyl diphosphate = all-trans-octaprenyl diphosphate + 5 diphosphate. Its function is as follows. Supplies octaprenyl diphosphate, the precursor for the side chain of the isoprenoid quinones ubiquinone and menaquinone. The polypeptide is Octaprenyl diphosphate synthase (ispB) (Haemophilus influenzae (strain ATCC 51907 / DSM 11121 / KW20 / Rd)).